Consider the following 96-residue polypeptide: Phosphoribosyl-ATP pyrophosphatase (96 aa).

This sequence belongs to the PRA-PH family.

It localises to the cytoplasm. The enzyme catalyses 1-(5-phospho-beta-D-ribosyl)-ATP + H2O = 1-(5-phospho-beta-D-ribosyl)-5'-AMP + diphosphate + H(+). It functions in the pathway amino-acid biosynthesis; L-histidine biosynthesis; L-histidine from 5-phospho-alpha-D-ribose 1-diphosphate: step 2/9. This is Phosphoribosyl-ATP pyrophosphatase from Methanococcus maripaludis (strain C5 / ATCC BAA-1333).